The following is a 777-amino-acid chain: ATPase ARSA1 (777 aa).

Position 110-117 (lysine 110–serine 117) interacts with ATP. The active site involves aspartate 139. ATP contacts are provided by residues asparagine 372 and lysine 454 to serine 461. Aspartate 483 is a catalytic residue. Residue asparagine 712 participates in ATP binding.

It belongs to the arsA ATPase family. In terms of assembly, monomer. Interacts with TOC34.

It localises to the cytoplasm. It is found in the cytosol. Functionally, ATPase required for the post-translational delivery of tail-anchored (TA) proteins to the chloroplast. Required for the accumulation of TOC34, an essential component of the outer chloroplast membrane translocon (TOC) complex. Recognizes and selectively binds the transmembrane domain of TA proteins in the cytosol. This complex then targets to chloroplast, where the tail-anchored protein is released for insertion. This process is regulated by ATP binding and hydrolysis. This chain is ATPase ARSA1, found in Chlamydomonas reinhardtii (Chlamydomonas smithii).